The following is a 114-amino-acid chain: Large ribosomal subunit protein bL21 (114 aa).

This sequence belongs to the bacterial ribosomal protein bL21 family. As to quaternary structure, part of the 50S ribosomal subunit. Contacts protein L20.

Its function is as follows. This protein binds to 23S rRNA in the presence of protein L20. This is Large ribosomal subunit protein bL21 from Protochlamydia amoebophila (strain UWE25).